The following is an 894-amino-acid chain: UPF0182 protein GSU2333 (894 aa).

Transmembrane regions (helical) follow at residues 6 to 26 (FLLI…LITF), 50 to 70 (VGAG…NLYF), 98 to 118 (MVQM…LLAG), 162 to 182 (KGFV…VYFF), 203 to 223 (LAIL…LDAV), 250 to 270 (ILTL…WKGA), and 275 to 295 (LIPP…YPAM).

Belongs to the UPF0182 family.

The protein localises to the cell membrane. This Geobacter sulfurreducens (strain ATCC 51573 / DSM 12127 / PCA) protein is UPF0182 protein GSU2333.